Here is a 258-residue protein sequence, read N- to C-terminus: GCN5-related N-acetyltransferase 2, chloroplastic (258 aa).

The transit peptide at 1 to 58 (MLLIPISSSSSSSISPPPNSYPSNHHSLFFSNLTFPIQHGSRKLKTLRLRANFWESIR) directs the protein to the chloroplast. The segment at 107-194 (IIFSSGGEID…DHAFNATIWD (88 aa)) is interaction with begomoviruses NSP protein. The region spanning 107–258 (IIFSSGGEID…GIKGMFWYPK (152 aa)) is the N-acetyltransferase domain. Acetyl-CoA is bound by residues 195-197 (VLV), 203-208 (GQGLGK), 231-233 (DSQ), and Tyr-238. The active-site Proton donor is the Tyr-238.

Belongs to the acetyltransferase family. GNAT subfamily. As to quaternary structure, oligomer. Interacts with begomoviruses NSP but not with CP. This interaction may allow NSP to recruit NSI monomers to acetylate viral genome-bound CP and thus regulate nuclear export of viral genome by NSP. In terms of processing, S-sulfhydrated and activated by hydrogen sulfide H(2)S to promote melatonin accumulation and subsequent melatonin-dependent stomotal closure to combat osmotic stress. Autoacetylated. Highly expressed in cauline leaves and seeds, at lower levels in stems, siliques, inflorescences and rosettes leaves and at very low levels in roots. Expressed in the xylem parenchyma and phloem of the leaves and root, and in guard cells of young leaves.

The protein localises to the plastid. It localises to the chloroplast. It catalyses the reaction 5-methoxytryptamine + acetyl-CoA = melatonin + CoA + H(+). The catalysed reaction is L-lysyl-[histone] + acetyl-CoA = N(6)-acetyl-L-lysyl-[histone] + CoA + H(+). The enzyme catalyses L-lysyl-[protein] + acetyl-CoA = N(6)-acetyl-L-lysyl-[protein] + CoA + H(+). It carries out the reaction serotonin + acetyl-CoA = N-acetylserotonin + CoA + H(+). It catalyses the reaction N-terminal L-alanyl-[protein] + acetyl-CoA = N-terminal N(alpha)-acetyl-L-alanyl-[protein] + CoA + H(+). The catalysed reaction is N-terminal L-seryl-[protein] + acetyl-CoA = N-terminal N(alpha)-acetyl-L-seryl-[protein] + CoA + H(+). The enzyme catalyses N-terminal L-valyl-[protein] + acetyl-CoA = N-terminal N(alpha)-acetyl-L-valyl-[protein] + CoA + H(+). It carries out the reaction N-terminal glycyl-[protein] + acetyl-CoA = N-terminal N(alpha)-acetylglycyl-[protein] + CoA + H(+). It catalyses the reaction an N-terminal L-alpha-aminoacyl-[protein] + acetyl-CoA = N-terminal N(alpha)-acetyl-L-alpha-aminoacyl-[protein] + CoA + H(+). The catalysed reaction is N-terminal L-threonyl-[protein] + acetyl-CoA = N-terminal N(alpha)-acetyl-L-threonyl-[protein] + CoA + H(+). The enzyme catalyses N-terminal L-methionyl-[protein] + acetyl-CoA = N-terminal N(alpha)-acetyl-L-methionyl-[protein] + CoA + H(+). It carries out the reaction N-terminal L-leucyl-[protein] + acetyl-CoA = N-terminal N(alpha)-acetyl-L-leucyl-[protein] + CoA + H(+). Inhibited by the viral nuclear shuttle protein (NSP) that binds to the region required for oligomerization. Functionally, protein acetyltransferase with dual specificity triggering both N-alpha-acetylation (NTA), with a preference for alanine, serine, threonine, methionine and to a lower extent valine as substrates (can also use glycine and leucine), and epsilon-lysine acetylation (KA) of several plastid proteins. Triggers lysine acetylation in KEA1 and KEA2. Acetylates in vitro histones H2A and H3. Does not act as a transcriptional activator but required for the dynamic reorganization of thylakoid protein complexes and grana during photosynthetic state transitions. Involved in melatonin biosynthesis by catalyzing the formation of N-acetylserotonin (NAS) from serotonin and of melatonin (N-acetyl-5-methoxytryptamine) from 5-methoxytryptamine (5-MT). By triggering melatonin biosynthesis, contributes to the chloroplast protein quality control (CPQC), which plays a pivotal role in starch synthesis, and confers melatonin-associated tolerance to high light (HL) stress. Prevents the accumulation of oil and anthocyanin content in mature seeds and avoids seed germination in a melatonin-dependent manner, but promotes mucilage production in the seed coat. Contributes to melatonin-mediated anthocyanin production in cold-exposed seedlings. Implicated in melatonin-monitored circadian dynamics of stomatal aperture to minimize night water loss and promote drought tolerance, partly by triggering hydrogen sulfide H(2)S-dependent stomotal closure in response to osmotic stress. Its function is as follows. (Microbial infection) Required for begomovirus infection and systemic spread. In case of begomoviruses infection, acetylates the capsid protein (CP), but not the nuclear shuttle protein (NSP). Stimulates melatonin-triggered defense responses to the necrotrophic Botrytis cinerea. This Arabidopsis thaliana (Mouse-ear cress) protein is GCN5-related N-acetyltransferase 2, chloroplastic.